The sequence spans 131 residues: MKFRKGRPKILRLISEEPQFKLFKPVGIPRTDLESEVLTFEELESIRLVDYLNHPHEDAADEMGISRRVFWNILKSARKKVADALINGKMIDIGGGYYKIRDCNYEDECQRGKFCKYGVSNCLRLKNRDSE.

This sequence belongs to the UPF0251 family.

The chain is UPF0251 protein MMP0619 from Methanococcus maripaludis (strain DSM 14266 / JCM 13030 / NBRC 101832 / S2 / LL).